We begin with the raw amino-acid sequence, 448 residues long: L-seryl-tRNA(Sec) selenium transferase (448 aa).

Lysine 284 is modified (N6-(pyridoxal phosphate)lysine).

The protein belongs to the SelA family. Pyridoxal 5'-phosphate is required as a cofactor.

It is found in the cytoplasm. The catalysed reaction is L-seryl-tRNA(Sec) + selenophosphate + H(+) = L-selenocysteinyl-tRNA(Sec) + phosphate. It functions in the pathway aminoacyl-tRNA biosynthesis; selenocysteinyl-tRNA(Sec) biosynthesis; selenocysteinyl-tRNA(Sec) from L-seryl-tRNA(Sec) (bacterial route): step 1/1. Converts seryl-tRNA(Sec) to selenocysteinyl-tRNA(Sec) required for selenoprotein biosynthesis. The chain is L-seryl-tRNA(Sec) selenium transferase from Nautilia profundicola (strain ATCC BAA-1463 / DSM 18972 / AmH).